Here is a 107-residue protein sequence, read N- to C-terminus: Ribosome-associated factor Y (107 aa).

The tract at residues 85-107 is disordered; that stretch reads LNKLQHKSESRRADERLKDSFEN.

Associates mainly with 70S ribosomes.

During stationary phase, prevents 70S dimer formation, probably in order to regulate translation efficiency during transition between the exponential and the stationary phases. In addition, during environmental stress such as cold shock or excessive cell density at stationary phase, stabilizes the 70S ribosome against dissociation, inhibits translation initiation and increase translation accuracy. When normal growth conditions are restored, is quickly released from the ribosome. The chain is Ribosome-associated factor Y from Haemophilus influenzae (strain ATCC 51907 / DSM 11121 / KW20 / Rd).